The chain runs to 408 residues: Arginine biosynthesis bifunctional protein ArgJ (408 aa).

Substrate is bound by residues threonine 158, lysine 184, threonine 195, glutamate 281, asparagine 403, and threonine 408. Threonine 195 serves as the catalytic Nucleophile.

Belongs to the ArgJ family. In terms of assembly, heterotetramer of two alpha and two beta chains.

The protein resides in the cytoplasm. The enzyme catalyses N(2)-acetyl-L-ornithine + L-glutamate = N-acetyl-L-glutamate + L-ornithine. The catalysed reaction is L-glutamate + acetyl-CoA = N-acetyl-L-glutamate + CoA + H(+). The protein operates within amino-acid biosynthesis; L-arginine biosynthesis; L-ornithine and N-acetyl-L-glutamate from L-glutamate and N(2)-acetyl-L-ornithine (cyclic): step 1/1. Its pathway is amino-acid biosynthesis; L-arginine biosynthesis; N(2)-acetyl-L-ornithine from L-glutamate: step 1/4. In terms of biological role, catalyzes two activities which are involved in the cyclic version of arginine biosynthesis: the synthesis of N-acetylglutamate from glutamate and acetyl-CoA as the acetyl donor, and of ornithine by transacetylation between N(2)-acetylornithine and glutamate. The sequence is that of Arginine biosynthesis bifunctional protein ArgJ from Bacillus cereus (strain ZK / E33L).